The primary structure comprises 289 residues: Elongation factor Ts (289 aa).

Residues 82 to 85 are involved in Mg(2+) ion dislocation from EF-Tu; that stretch reads TDFL.

It belongs to the EF-Ts family.

Its subcellular location is the cytoplasm. Functionally, associates with the EF-Tu.GDP complex and induces the exchange of GDP to GTP. It remains bound to the aminoacyl-tRNA.EF-Tu.GTP complex up to the GTP hydrolysis stage on the ribosome. This is Elongation factor Ts from Azotobacter vinelandii (strain DJ / ATCC BAA-1303).